The chain runs to 89 residues: Small ribosomal subunit protein uS17 (89 aa).

Belongs to the universal ribosomal protein uS17 family. As to quaternary structure, part of the 30S ribosomal subunit.

Its function is as follows. One of the primary rRNA binding proteins, it binds specifically to the 5'-end of 16S ribosomal RNA. The sequence is that of Small ribosomal subunit protein uS17 from Paracidovorax citrulli (strain AAC00-1) (Acidovorax citrulli).